The primary structure comprises 54 residues: U-reduvitoxin-Pr7a (54 aa).

Positions 1–23 are cleaved as a signal peptide; it reads MDFLRILLFVLACIMALFTSAIA. 3 disulfide bridges follow: Cys26-Cys41, Cys33-Cys46, and Cys40-Cys53.

It belongs to the venom Ptu1-like knottin family. In terms of tissue distribution, expressed by the venom gland.

It localises to the secreted. Its function is as follows. Binds reversibly and blocks P/Q-type voltage-gated calcium channels (Cav). The chain is U-reduvitoxin-Pr7a from Platymeris rhadamanthus (Red spot assassin bug).